The primary structure comprises 213 residues: Golgi apparatus membrane protein TVP23 homolog A (213 aa).

4 helical membrane-spanning segments follow: residues 32 to 52 (PLATFFHLFFRVSAIVTYVSC), 54 to 74 (WFSKSFVGCFVMVLLLLSLDF), 123 to 143 (IFWLGLIICPMIWIVFFFSTL), and 150 to 170 (WLALVVAGISLQAANLYGYIL).

This sequence belongs to the TVP23 family.

Its subcellular location is the membrane. This is Golgi apparatus membrane protein TVP23 homolog A (TVP23A) from Homo sapiens (Human).